Here is a 90-residue protein sequence, read N- to C-terminus: uncharacterized protein (90 aa).

Positions 25–90 (GEAAYNSPTN…PPIAPPPILD (66 aa)) are disordered. Polar residues-rich tracts occupy residues 30-54 (NSPTNNQKSQGTNSSFGDTSPTESV) and 65-79 (NDQTSIGNSDTSNVN).

This is an uncharacterized protein from Bacillus subtilis (strain 168).